A 30-amino-acid polypeptide reads, in one-letter code: Alpha-defensin PhD-4 (30 aa).

Intrachain disulfides connect Cys-2-Cys-30, Cys-4-Cys-19, and Cys-9-Cys-29.

The protein resides in the secreted. In low salt conditions, has antibacterial activity against the Gram-negative bacterium E.coli ML35p (MIC=2.4 uM), the Gram-positive bacteria L.monocytogenes EGD (MIC=2.2 uM) and methicillin-resistant S.aureus ATCC 33591 (MIC=3.5 uM), and the fungus C.albicans 820 (MIC=3.9 uM). At high physiological salt concentrations the antimicrobial activity decreases significantly: E.coli ML35p (MIC=7.1 uM), L.monocytogenes EGD (MIC=1.8 uM), S.aureus ATCC 33591 (MIC=&gt;50 uM), and C.albicans 820 (MIC=&gt;50 uM). This chain is Alpha-defensin PhD-4, found in Papio hamadryas (Hamadryas baboon).